Here is a 325-residue protein sequence, read N- to C-terminus: Glutarate 2-hydroxylase (325 aa).

Fe cation-binding residues include H160, D162, and H292.

The protein belongs to the glutarate hydroxylase family. In terms of assembly, homotetramer. The cofactor is Fe(2+).

It carries out the reaction glutarate + 2-oxoglutarate + O2 = (S)-2-hydroxyglutarate + succinate + CO2. It functions in the pathway amino-acid degradation. Its function is as follows. Acts as an alpha-ketoglutarate-dependent dioxygenase catalyzing hydroxylation of glutarate (GA) to L-2-hydroxyglutarate (L2HG). Functions in a L-lysine degradation pathway that proceeds via cadaverine, glutarate and L-2-hydroxyglutarate. This Escherichia fergusonii (strain ATCC 35469 / DSM 13698 / CCUG 18766 / IAM 14443 / JCM 21226 / LMG 7866 / NBRC 102419 / NCTC 12128 / CDC 0568-73) protein is Glutarate 2-hydroxylase.